Consider the following 525-residue polypeptide: MSLAEAIRLWNEGVLAADKKDWKGALEAFSEVQDPHSRICFNIGCVNTILENLQAAEQAFTKSINRDKHSAVAYFQRGMLYYRMEKYDLAIKDLKEALTQLRGNQLIDYKILGLQFKLFACEVLYNIALMHAKKEEWKKAEEQLALATNMKSEPRHSKIDKAMESIWKQKLFEPVVIPVGRLFRPNERQVAQLAKKDYLGKATVVASVVHQDNFSGFAPLQPQSAEPPPRPKTPEIFRALEGEAHRVLFGFVPETPEELQVMPGNIVFVLKKGSDNWATVMFNGQKGLVPCNYLEPVELRIHPQSQPQEDTSPESDIPPPPNSSPPGRLQLSPGHKQKEPKELKLSVPMPYMLKVHYKYTVVMETRLGLPYSQLRNMVSKKLALSPEHTKLSYRRRDSHELLLLSEESMKDAWGQVKNYCLTLWCEHTVGDQGLIDEPIQRENSDASKQTTEPQPKEGTQVVAIFSYEAAQPEDLEFVEGDVILVLSHVNEEWLEGECKGKVGIFPKAFVEGCAAKNLEGIPREV.

3 TPR repeats span residues S37 to S70, A71 to N104, and C121 to P154. T233 carries the phosphothreonine modification. Residues L240–L299 enclose the SH3 1 domain. A disordered region spans residues Q304–L343. Phosphoserine is present on residues S324 and S398. Positions P350–T428 constitute a PB1 domain. Positions E437–E457 are disordered. An SH3 2 domain is found at K456–A515.

This sequence belongs to the NCF2/NOXA1 family. In terms of assembly, component of the phagocyte NADPH oxidase complex composed of an obligatory core heterodimer formed by the membrane proteins CYBA and CYBB and the cytosolic regulatory subunits NCF1/p47-phox, NCF2/p67-phox, NCF4/p40-phox and the small GTPase RAC1 or RAC2. Part of a cytosolic complex composed at least by NCF1, NCF2 and NCF4. Interacts with NCF4. Interacts (via the C-terminal SH3 domain) with NCF1 (via C-terminus). Interacts with SYTL1 and RAC1. May interact with NOXO1. Interacts with S100A8 and calprotectin (S100A8/9). Interacts with GBP7 (via GB1/RHD3-type G domain). Interacts with CYBB; the interaction is enhanced in the presence of GBP7.

It localises to the cytoplasm. In terms of biological role, NCF2, NCF1, and a membrane bound cytochrome b558 are required for activation of the latent NADPH oxidase (necessary for superoxide production). Functionally, subunit of the phagocyte NADPH oxidase complex that mediates the transfer of electrons from cytosolic NADPH to O2 to produce the superoxide anion (O2(-)). In the activated complex, electrons are first transferred from NADPH to flavin adenine dinucleotide (FAD) and subsequently transferred via two heme molecules to molecular oxygen, producing superoxide through an outer-sphere reaction. Activation of the NADPH oxidase complex is initiated by the assembly of cytosolic subunits of the NADPH oxidase complex with the core NADPH oxidase complex to form a complex at the plasma membrane or phagosomal membrane. This activation process is initiated by phosphorylation dependent binding of the cytosolic NCF1/p47-phox subunit to the C-terminus of CYBA/p22-phox. The protein is Neutrophil cytosol factor 2 of Mus musculus (Mouse).